Consider the following 205-residue polypeptide: Dephospho-CoA kinase (205 aa).

The DPCK domain occupies 5-201 (VVGLTGGIGS…QRYLQLSGNH (197 aa)). Position 13-18 (13-18 (GSGKTT)) interacts with ATP.

Belongs to the CoaE family.

Its subcellular location is the cytoplasm. It carries out the reaction 3'-dephospho-CoA + ATP = ADP + CoA + H(+). It functions in the pathway cofactor biosynthesis; coenzyme A biosynthesis; CoA from (R)-pantothenate: step 5/5. Its function is as follows. Catalyzes the phosphorylation of the 3'-hydroxyl group of dephosphocoenzyme A to form coenzyme A. The polypeptide is Dephospho-CoA kinase (Shewanella oneidensis (strain ATCC 700550 / JCM 31522 / CIP 106686 / LMG 19005 / NCIMB 14063 / MR-1)).